Reading from the N-terminus, the 425-residue chain is Serine--tRNA ligase (425 aa).

230–232 lines the L-serine pocket; that stretch reads TAE. 261 to 263 lines the ATP pocket; that stretch reads RSE. Residue Glu-284 participates in L-serine binding. An ATP-binding site is contributed by 348–351; sequence EISS. Ser-384 contributes to the L-serine binding site.

Belongs to the class-II aminoacyl-tRNA synthetase family. Type-1 seryl-tRNA synthetase subfamily. As to quaternary structure, homodimer. The tRNA molecule binds across the dimer.

It is found in the cytoplasm. The enzyme catalyses tRNA(Ser) + L-serine + ATP = L-seryl-tRNA(Ser) + AMP + diphosphate + H(+). The catalysed reaction is tRNA(Sec) + L-serine + ATP = L-seryl-tRNA(Sec) + AMP + diphosphate + H(+). It functions in the pathway aminoacyl-tRNA biosynthesis; selenocysteinyl-tRNA(Sec) biosynthesis; L-seryl-tRNA(Sec) from L-serine and tRNA(Sec): step 1/1. Functionally, catalyzes the attachment of serine to tRNA(Ser). Is also able to aminoacylate tRNA(Sec) with serine, to form the misacylated tRNA L-seryl-tRNA(Sec), which will be further converted into selenocysteinyl-tRNA(Sec). This chain is Serine--tRNA ligase, found in Streptococcus pyogenes serotype M4 (strain MGAS10750).